Consider the following 74-residue polypeptide: MSKEDAIEMEGVVTESLPNAMFRVDLDNGFNVLAHISGKIRRNYIKILPGDRVKVELSPYDLNKGRITYRLKKK.

An S1-like domain is found at 1 to 72; that stretch reads MSKEDAIEME…NKGRITYRLK (72 aa).

It belongs to the IF-1 family. Component of the 30S ribosomal translation pre-initiation complex which assembles on the 30S ribosome in the order IF-2 and IF-3, IF-1 and N-formylmethionyl-tRNA(fMet); mRNA recruitment can occur at any time during PIC assembly.

The protein resides in the cytoplasm. Its function is as follows. One of the essential components for the initiation of protein synthesis. Stabilizes the binding of IF-2 and IF-3 on the 30S subunit to which N-formylmethionyl-tRNA(fMet) subsequently binds. Helps modulate mRNA selection, yielding the 30S pre-initiation complex (PIC). Upon addition of the 50S ribosomal subunit IF-1, IF-2 and IF-3 are released leaving the mature 70S translation initiation complex. The polypeptide is Translation initiation factor IF-1 (Synechococcus sp. (strain JA-2-3B'a(2-13)) (Cyanobacteria bacterium Yellowstone B-Prime)).